We begin with the raw amino-acid sequence, 108 residues long: Thiosulfate sulfurtransferase GlpE (108 aa).

Residues 17-105 form the Rhodanese domain; sequence HQGAAVLVDI…WHRRFPADVA (89 aa). Cys-65 serves as the catalytic Cysteine persulfide intermediate.

It belongs to the GlpE family.

It is found in the cytoplasm. It catalyses the reaction thiosulfate + hydrogen cyanide = thiocyanate + sulfite + 2 H(+). The enzyme catalyses thiosulfate + [thioredoxin]-dithiol = [thioredoxin]-disulfide + hydrogen sulfide + sulfite + 2 H(+). Functionally, transferase that catalyzes the transfer of sulfur from thiosulfate to thiophilic acceptors such as cyanide or dithiols. May function in a CysM-independent thiosulfate assimilation pathway by catalyzing the conversion of thiosulfate to sulfite, which can then be used for L-cysteine biosynthesis. This Salmonella choleraesuis (strain SC-B67) protein is Thiosulfate sulfurtransferase GlpE.